The sequence spans 361 residues: Velvet complex subunit B (361 aa).

Disordered stretches follow at residues 1 to 36 and 308 to 340; these read MYAV…SLRQ and NGAP…VLLR. The span at 23-35 shows a compositional bias: polar residues; that stretch reads PSVQYPSGTTSLR. The region spanning 47 to 353 is the Velvet domain; that stretch reads QDGRSWSLQV…SASALRYRVS (307 aa). Positions 323 to 336 are enriched in low complexity; sequence SLNPSRSSPPKSSP.

This sequence belongs to the velvet family. VelB subfamily. As to quaternary structure, component of the heterotrimeric velvet complex composed of laeA, veA and velB; VeA acting as a bridging protein between laeA and velB. Interacts with velA. Forms a heterodimeric complex with vosA; the formation of the velB-vosA complex is light-dependent. Interacts with vosA.

It is found in the nucleus. Its subcellular location is the cytoplasm. In terms of biological role, component of the velvet transcription factor complex that controls sexual/asexual developmental ratio in response to light, promoting sexual development in the darkness while stimulating asexual sporulation under illumination. The velvet complex acts as a global regulator for secondary metabolite gene expression. Component of the velB-VosA heterodimeric complex that plays a dual role in activating genes associated with spore maturation and repressing certain development-associated genes. The velB-VosA complex binds DNA through the DNA-binding domain of vosA that recognizes an 11-nucleotide consensus sequence 5'-CTGGCCGCGGC-3' consisting of two motifs in the promoters of key developmental regulatory genes. Controls conidiophore formation. The sequence is that of Velvet complex subunit B from Penicillium rubens (strain ATCC 28089 / DSM 1075 / NRRL 1951 / Wisconsin 54-1255) (Penicillium chrysogenum).